Reading from the N-terminus, the 661-residue chain is Transmembrane and coiled-coil domain-containing protein STS1 (661 aa).

Disordered stretches follow at residues 34–71 (AHHHHDDDDEEQGRTSTSSGGGGGSSSSSSNSGAGADA) and 154–185 (VGNTIKGGDQDALPSSSGTDKSPGESSHDDQL). The segment covering 59-69 (SSSSSNSGAGA) has biased composition (low complexity). Residues 175–184 (SPGESSHDDQ) show a composition bias toward basic and acidic residues. A run of 4 helical transmembrane segments spans residues 306 to 326 (ALLAITGGLAAPAIAAGFGAL), 333 to 353 (LVPVIGASGFAAMATAAGSVA), 355 to 375 (SVAVAASFGAAGAGLTGSKMA), and 466 to 486 (LSGLLAAFAWPATLLAATDFI).

It belongs to the TMCO4 family. As to quaternary structure, interacts with PKS10/PKS2 and 4CLL9/ACOS12.

It localises to the endoplasmic reticulum membrane. In terms of biological role, involved in anther lipids biosynthesis and is required for tapetum degradation and pollen wall formation. Required for the formation of Ubisch bodies and microspores. Possesses lipase activity in vitro toward two synthetic substrates, p-nitrophenyl acetate (pNPA) and p-nitrophenyl butyrate (pNPB). The sequence is that of Transmembrane and coiled-coil domain-containing protein STS1 from Oryza sativa subsp. japonica (Rice).